A 366-amino-acid chain; its full sequence is uncharacterized protein (366 aa).

The segment at 199-267 (QKKQIEDEEK…QLKDAQAKRD (69 aa)) is disordered.

This is an uncharacterized protein from Haemophilus influenzae (strain ATCC 51907 / DSM 11121 / KW20 / Rd).